The sequence spans 316 residues: tRNA pseudouridine synthase B (316 aa).

The active-site Nucleophile is the Asp-47.

This sequence belongs to the pseudouridine synthase TruB family. Type 1 subfamily.

It catalyses the reaction uridine(55) in tRNA = pseudouridine(55) in tRNA. Functionally, responsible for synthesis of pseudouridine from uracil-55 in the psi GC loop of transfer RNAs. The chain is tRNA pseudouridine synthase B from Photobacterium profundum (strain SS9).